We begin with the raw amino-acid sequence, 200 residues long: Thymidylate kinase (200 aa).

Residue 10–17 (GIDGAGKS) coordinates ATP.

It belongs to the thymidylate kinase family.

It carries out the reaction dTMP + ATP = dTDP + ADP. Phosphorylation of dTMP to form dTDP in both de novo and salvage pathways of dTTP synthesis. The chain is Thymidylate kinase from Cupriavidus metallidurans (strain ATCC 43123 / DSM 2839 / NBRC 102507 / CH34) (Ralstonia metallidurans).